The chain runs to 248 residues: Triosephosphate isomerase (248 aa).

Substrate is bound by residues N11 and K13. The active-site Electrophile is H95. E165 (proton acceptor) is an active-site residue.

This sequence belongs to the triosephosphate isomerase family. As to quaternary structure, homodimer.

It localises to the cytoplasm. It catalyses the reaction D-glyceraldehyde 3-phosphate = dihydroxyacetone phosphate. The catalysed reaction is dihydroxyacetone phosphate = methylglyoxal + phosphate. The protein operates within carbohydrate degradation; glycolysis; D-glyceraldehyde 3-phosphate from glycerone phosphate: step 1/1. Its pathway is carbohydrate biosynthesis; gluconeogenesis. Functionally, triosephosphate isomerase is an extremely efficient metabolic enzyme that catalyzes the interconversion between dihydroxyacetone phosphate (DHAP) and D-glyceraldehyde-3-phosphate (G3P) in glycolysis and gluconeogenesis. It is also responsible for the non-negligible production of methylglyoxal a reactive cytotoxic side-product that modifies and can alter proteins, DNA and lipids. The sequence is that of Triosephosphate isomerase (tpi1) from Oryzias latipes (Japanese rice fish).